Here is a 527-residue protein sequence, read N- to C-terminus: Cytokinin dehydrogenase 3 (527 aa).

The signal sequence occupies residues 1–22 (MEVAMVCTRVNLLILILSLCSP). Residues 52–231 (LFHSPSAVLK…TRARILLQEA (180 aa)) enclose the FAD-binding PCMH-type domain. Residues Ala87, Gly89, and Gly91 each contribute to the FAD site. His92 bears the Pros-8alpha-FAD histidine mark. FAD contacts are provided by Ser93, Gln97, Asp155, Thr160, Ser166, Ile170, and Ile221. A glycan (N-linked (GlcNAc...) asparagine) is linked at Asn413. FAD is bound by residues Tyr471 and Gln509.

The protein belongs to the oxygen-dependent FAD-linked oxidoreductase family. Monomer. The cofactor is FAD. As to expression, expressed in inflorescence meristems. Highly expressed in lamina joints, and mainly in the parenchyma cells and vascular bundles on the abaxial side of the lamina joint. Expressed in roots, stems, leaves and young panicles.

The protein resides in the endoplasmic reticulum. The enzyme catalyses N(6)-dimethylallyladenine + A + H2O = 3-methyl-2-butenal + adenine + AH2. Its function is as follows. Catalyzes the oxidation of cytokinins, a family of N(6)-substituted adenine derivatives, where the substituent is an isopentenyl group. Cytokinins are plant hormones essential for plant growth, development, and stress responses. Exhibits specific activities toward trans-zeatin (tZ) and isopentenyladenine (iP). Plays a role in lamina joint inclination. Regulates cell proliferation and vascular bundle number on the abaxial side of lamina joint. In Oryza sativa subsp. japonica (Rice), this protein is Cytokinin dehydrogenase 3.